The sequence spans 359 residues: UPF0283 membrane protein Rleg2_1967 (359 aa).

Residues Met-1–Glu-43 are disordered. A compositionally biased stretch (basic and acidic residues) spans Thr-23–Ser-40. 2 helical membrane passes run Phe-77–Thr-97 and Leu-111–Ile-131.

It belongs to the UPF0283 family.

It localises to the cell inner membrane. This Rhizobium leguminosarum bv. trifolii (strain WSM2304) protein is UPF0283 membrane protein Rleg2_1967.